A 313-amino-acid polypeptide reads, in one-letter code: Ribosomal RNA small subunit methyltransferase H (313 aa).

S-adenosyl-L-methionine is bound by residues 35-37 (GGH), Asp-55, Phe-80, Asp-102, and Gln-109.

The protein belongs to the methyltransferase superfamily. RsmH family.

The protein localises to the cytoplasm. The enzyme catalyses cytidine(1402) in 16S rRNA + S-adenosyl-L-methionine = N(4)-methylcytidine(1402) in 16S rRNA + S-adenosyl-L-homocysteine + H(+). Its function is as follows. Specifically methylates the N4 position of cytidine in position 1402 (C1402) of 16S rRNA. In Shewanella oneidensis (strain ATCC 700550 / JCM 31522 / CIP 106686 / LMG 19005 / NCIMB 14063 / MR-1), this protein is Ribosomal RNA small subunit methyltransferase H.